Reading from the N-terminus, the 107-residue chain is DNA-directed RNA polymerase subunit omega (107 aa).

Belongs to the RNA polymerase subunit omega family. As to quaternary structure, the RNAP catalytic core consists of 2 alpha, 1 beta, 1 beta' and 1 omega subunit. When a sigma factor is associated with the core the holoenzyme is formed, which can initiate transcription.

The catalysed reaction is RNA(n) + a ribonucleoside 5'-triphosphate = RNA(n+1) + diphosphate. In terms of biological role, promotes RNA polymerase assembly. Latches the N- and C-terminal regions of the beta' subunit thereby facilitating its interaction with the beta and alpha subunits. The protein is DNA-directed RNA polymerase subunit omega of Oenococcus oeni (strain ATCC BAA-331 / PSU-1).